The following is an 857-amino-acid chain: Protein argonaute-1 (857 aa).

A PAZ domain is found at 227-346 (PVIEFMCEVL…LPLEVCNIVA (120 aa)). 2 interaction with guide RNA regions span residues 309–314 (YFKQKY) and 522–564 (GKTP…LCLK). Positions 515 to 816 (LIIVILPGKT…VAFRARYHLV (302 aa)) constitute a Piwi domain. Positions 670–675 (PEGQLP) are impairs access of bound RNA to the active site. Interaction with guide RNA regions lie at residues 708-712 (RHHTR), 751-759 (HAGIQGTSR), and 788-813 (YVRC…RARY).

Belongs to the argonaute family. Ago subfamily. In terms of assembly, interacts with DDB1, DDX5, DDX6, DHX30, DHX36, DDX47, DICER1, AGO2, ELAVL1, HNRNPF, IGF2BP1, ILF3, IMP8, MATR3, MOV10, PABPC1, PRMT5, RBM4, SART3, TNRC6B, UPF1 and YBX1. Associates with polysomes and messenger ribonucleoproteins (mNRPs). Interacts with LIMD1, WTIP and AJUBA. Interacts with APOBEC3F, APOBEC3G and APOBEC3H. In terms of processing, ubiquitinated on surface-exposed lysines by a SCF-like E3 ubiquitin-protein ligase complex containing ZSWIM8 during target-directed microRNA degradation (TDMD), a process that mediates degradation of microRNAs (miRNAs). Ubiquitination by the SCF-like E3 ubiquitin-protein ligase complex containing ZSWIM8 leads to its subsequent degradation, thereby exposing miRNAs for degradation. ZSWIM8 recognizes and binds AGO1 when it is engaged with a TDMD target.

The protein resides in the cytoplasm. Its subcellular location is the P-body. Functionally, required for RNA-mediated gene silencing (RNAi). Binds to short RNAs such as microRNAs (miRNAs) or short interfering RNAs (siRNAs), and represses the translation of mRNAs which are complementary to them. Lacks endonuclease activity and does not appear to cleave target mRNAs. Also required for transcriptional gene silencing (TGS) of promoter regions which are complementary to bound short antigene RNAs (agRNAs). The protein is Protein argonaute-1 (AGO1) of Homo sapiens (Human).